The following is a 368-amino-acid chain: Somatostatin receptor type 5 (368 aa).

The Extracellular portion of the chain corresponds to 1–45 (MEPLFPASPLTTWNTSSVVPSGSGDENGTLAGLGPSPGARAVVVP). 2 N-linked (GlcNAc...) asparagine glycosylation sites follow: Asn14 and Asn27. A helical membrane pass occupies residues 46–66 (VLYLLVCAVGLGGNTLVIYVV). Over 67-77 (LRHAKMKTVTN) the chain is Cytoplasmic. A helical membrane pass occupies residues 78-98 (IYILNLAVADVLLMLGLPFVA). At 99–115 (TQNAISYWPFGPVLCRL) the chain is on the extracellular side. Residues Cys113 and Cys188 are joined by a disulfide bond. Residues 116 to 136 (VMTLDGINQFTSIFCLTVMSV) form a helical membrane-spanning segment. Residues 137–158 (DRYLAVVHPIRSARWRRPRVAK) lie on the Cytoplasmic side of the membrane. Residues 159–179 (LASAAVWAFSLVMSLPLVVFA) traverse the membrane as a helical segment. Topologically, residues 180–207 (DIQEGWNTCNLSWPEPVGLWGAVFIIYT) are extracellular. The N-linked (GlcNAc...) asparagine glycan is linked to Asn189. A helical transmembrane segment spans residues 208–228 (SVLGFFGPLLVICLCYLLIVV). Topologically, residues 229–251 (KLKASGVRVGSTRRRSERKVTRM) are cytoplasmic. The chain crosses the membrane as a helical span at residues 252 to 272 (VVVVVLVFAGCWLPFFIVNIV). At 273-286 (NLAFALPEEPASAG) the chain is on the extracellular side. The helical transmembrane segment at 287–309 (AYFFVVVLSYANSCANPLLYGFL) threads the bilayer. Topologically, residues 310–368 (SDNFRQSFRKVLCLRKGYGAGAEDADATEPQPGPSSRLQEAMMPVRSCKANGLMQTSKL) are cytoplasmic. A lipid anchor (S-palmitoyl cysteine; by ZDHHC5) is attached at Cys322.

Belongs to the G-protein coupled receptor 1 family. As to quaternary structure, heterodimer with SSTR2. Heterodimerization with SSTR2 increases cell growth inhibition activity of SSTR2. Palmitoylated by ZDHHC5, but not ZDHHC3, nor ZDHHC8. Palmitoylation creates an additional intracellular loop which is thought to be important for efficient coupling to G-proteins and may target the protein to lipid rafts.

The protein localises to the cell membrane. Functionally, receptor for somatostatin 28 and to a lesser extent for somatostatin-14. The activity of this receptor is mediated by G proteins which inhibit adenylyl cyclase. Increases cell growth inhibition activity of SSTR2 following heterodimerization. This Bos taurus (Bovine) protein is Somatostatin receptor type 5 (SSTR5).